Reading from the N-terminus, the 337-residue chain is GDP-mannose transporter 1 (337 aa).

At 1 to 16 (MSELKTGHAGHNPWAS) the chain is on the cytoplasmic side. The helical transmembrane segment at 17–37 (VANSGPISILSYCGSSILMTV) threads the bilayer. The Lumenal segment spans residues 38-51 (TNKFVVNLKDFNMN). The helical transmembrane segment at 52 to 72 (FVMLFVQSLVCTITLIILRIL) threads the bilayer. At 73 to 92 (GYAKFRSLNKTDAKNWFPIS) the chain is on the cytoplasmic side. The chain crosses the membrane as a helical span at residues 93-113 (FLLVLMIYTSSKALQYLAVPI). Topologically, residues 114-119 (YTIFKN) are lumenal. An N-linked (GlcNAc...) asparagine glycan is attached at Asn-119. The helical transmembrane segment at 120–140 (LTIILIAYGEVLFFGGSVTSM) threads the bilayer. Residues 141-144 (ELSS) lie on the Cytoplasmic side of the membrane. A helical transmembrane segment spans residues 145–165 (FLLMVLSSVVATWGDQQAVAA). Residues 166-180 (KAASLAEGAAGAVAS) are Lumenal-facing. The chain crosses the membrane as a helical span at residues 181–201 (FNPGYFWMFTNCITSALFVLI). The Cytoplasmic portion of the chain corresponds to 202–215 (MRKRIKLTNFKDFD). Residues 216–236 (TMFYNNVLALPILLLFSFCVE) form a helical membrane-spanning segment. Over 237–252 (DWSSVNLTNNFSNDSL) the chain is Lumenal. N-linked (GlcNAc...) asparagine glycans are attached at residues Asn-242, Asn-246, and Asn-249. The helical transmembrane segment at 253–273 (TAMIISGVASVGISYCSGWCV) threads the bilayer. The Cytoplasmic segment spans residues 274-279 (RVTSST). Residues 280–300 (TYSMVGALNKLPIALSGLIFF) form a helical membrane-spanning segment. Over 301 to 304 (DAPR) the chain is Lumenal. The chain crosses the membrane as a helical span at residues 305 to 325 (NFLSILSIFIGFLSGIIYAVA). The Cytoplasmic portion of the chain corresponds to 326–337 (KQKKQQAQPLRK).

This sequence belongs to the TPT transporter family. SLC35D subfamily. As to quaternary structure, homooligomer.

The protein resides in the golgi apparatus membrane. The protein localises to the cytoplasmic vesicle membrane. Its subcellular location is the endoplasmic reticulum membrane. Functionally, involved in the import of GDP-mannose from the cytoplasm into the Golgi lumen. Defective copy causes severe glycosylation defect and abnormal retention of soluble endoplasmic reticulum proteins. Involved in vanadate sensitivity. The sequence is that of GDP-mannose transporter 1 (VRG4) from Saccharomyces cerevisiae (strain YJM789) (Baker's yeast).